We begin with the raw amino-acid sequence, 210 residues long: Putative protein-lysine deacylase ABHD14B (210 aa).

An N-acetylalanine modification is found at Ala-2. Ser-91 is subject to Phosphoserine. Catalysis depends on charge relay system residues Ser-111, Asp-162, and His-188.

The protein belongs to the AB hydrolase superfamily. ABHD14 family. May interact with TAF1.

Its subcellular location is the cytoplasm. The protein localises to the nucleus. It carries out the reaction L-lysyl-[protein] + acetyl-CoA = N(6)-acetyl-L-lysyl-[protein] + CoA + H(+). In terms of biological role, acts as an atypical protein-lysine deacetylase in vitro. Catalyzes the deacetylation of lysine residues using CoA as substrate, generating acetyl-CoA and the free amine of protein-lysine residues. Additional experiments are however required to confirm the protein-lysine deacetylase activity in vivo. Has hydrolase activity towards various surrogate p-nitrophenyl (pNp) substrates, such as pNp-butyrate, pNp-acetate and pNp-octanoate in vitro, with a strong preference for pNp-acetate. May activate transcription. The chain is Putative protein-lysine deacylase ABHD14B from Pongo abelii (Sumatran orangutan).